We begin with the raw amino-acid sequence, 432 residues long: Trigger factor (432 aa).

The region spanning 161 to 246 (EDRVTIDFTG…LKKVEERELP (86 aa)) is the PPIase FKBP-type domain.

The protein belongs to the FKBP-type PPIase family. Tig subfamily.

It localises to the cytoplasm. The catalysed reaction is [protein]-peptidylproline (omega=180) = [protein]-peptidylproline (omega=0). Involved in protein export. Acts as a chaperone by maintaining the newly synthesized protein in an open conformation. Functions as a peptidyl-prolyl cis-trans isomerase. This Klebsiella pneumoniae (strain 342) protein is Trigger factor.